A 243-amino-acid polypeptide reads, in one-letter code: DNA repair protein RecO (243 aa).

This sequence belongs to the RecO family.

Functionally, involved in DNA repair and RecF pathway recombination. This Caulobacter sp. (strain K31) protein is DNA repair protein RecO.